We begin with the raw amino-acid sequence, 168 residues long: ATP synthase F(1) complex subunit delta, mitochondrial (168 aa).

Residues 1–22 (MLPASLLRHPGLRRLMLQARTY) constitute a mitochondrion transit peptide. N6-acetyllysine; alternate is present on residues lysine 136 and lysine 165. Residues lysine 136 and lysine 165 each carry the N6-succinyllysine; alternate modification.

The protein belongs to the ATPase epsilon chain family. In terms of assembly, component of the ATP synthase complex composed at least of ATP5F1A/subunit alpha, ATP5F1B/subunit beta, ATP5MC1/subunit c (homooctomer), MT-ATP6/subunit a, MT-ATP8/subunit 8, ATP5ME/subunit e, ATP5MF/subunit f, ATP5MG/subunit g, ATP5MK/subunit k, ATP5MJ/subunit j, ATP5F1C/subunit gamma, ATP5F1D/subunit delta, ATP5F1E/subunit epsilon, ATP5PF/subunit F6, ATP5PB/subunit b, ATP5PD/subunit d, ATP5PO/subunit OSCP. ATP synthase complex consists of a soluble F(1) head domain (subunits alpha(3) and beta(3)) - the catalytic core - and a membrane F(0) domain - the membrane proton channel (subunits c, a, 8, e, f, g, k and j). These two domains are linked by a central stalk (subunits gamma, delta, and epsilon) rotating inside the F1 region and a stationary peripheral stalk (subunits F6, b, d, and OSCP). Component of a complex composed at least by ATPIF1, ATP5F1A, ATP5F1B, ATP5F1C AND ATP5F1E.

It localises to the mitochondrion. The protein resides in the mitochondrion inner membrane. In terms of biological role, subunit delta, of the mitochondrial membrane ATP synthase complex (F(1)F(0) ATP synthase or Complex V) that produces ATP from ADP in the presence of a proton gradient across the membrane which is generated by electron transport complexes of the respiratory chain. ATP synthase complex consist of a soluble F(1) head domain - the catalytic core - and a membrane F(1) domain - the membrane proton channel. These two domains are linked by a central stalk rotating inside the F(1) region and a stationary peripheral stalk. During catalysis, ATP synthesis in the catalytic domain of F(1) is coupled via a rotary mechanism of the central stalk subunits to proton translocation. In vivo, can only synthesize ATP although its ATP hydrolase activity can be activated artificially in vitro. With the central stalk subunit gamma, is essential for the biogenesis of F(1) catalytic part of the ATP synthase complex namely in the formation of F1 assembly intermediate. In Mus musculus (Mouse), this protein is ATP synthase F(1) complex subunit delta, mitochondrial.